A 325-amino-acid chain; its full sequence is Pyruvate dehydrogenase E1 component subunit beta (325 aa).

Residue Glu59 participates in thiamine diphosphate binding.

In terms of assembly, heterodimer of an alpha and a beta chain. Thiamine diphosphate serves as cofactor.

It carries out the reaction N(6)-[(R)-lipoyl]-L-lysyl-[protein] + pyruvate + H(+) = N(6)-[(R)-S(8)-acetyldihydrolipoyl]-L-lysyl-[protein] + CO2. In terms of biological role, the pyruvate dehydrogenase complex catalyzes the overall conversion of pyruvate to acetyl-CoA and CO(2). It contains multiple copies of three enzymatic components: pyruvate dehydrogenase (E1), dihydrolipoamide acetyltransferase (E2) and lipoamide dehydrogenase (E3). The polypeptide is Pyruvate dehydrogenase E1 component subunit beta (pdhB) (Rickettsia bellii (strain RML369-C)).